A 72-amino-acid polypeptide reads, in one-letter code: Small ribosomal subunit protein bS18 (72 aa).

It belongs to the bacterial ribosomal protein bS18 family. As to quaternary structure, part of the 30S ribosomal subunit. Forms a tight heterodimer with protein bS6.

In terms of biological role, binds as a heterodimer with protein bS6 to the central domain of the 16S rRNA, where it helps stabilize the platform of the 30S subunit. In Fusobacterium nucleatum subsp. nucleatum (strain ATCC 25586 / DSM 15643 / BCRC 10681 / CIP 101130 / JCM 8532 / KCTC 2640 / LMG 13131 / VPI 4355), this protein is Small ribosomal subunit protein bS18.